Here is a 400-residue protein sequence, read N- to C-terminus: Enoyl-[acyl-carrier-protein] reductase [NADH] (400 aa).

Residues 48-53, 74-75, 111-112, and 139-140 contribute to the NAD(+) site; these read GSSSGY, FE, DA, and LA. Y225 contacts substrate. Residue Y235 is the Proton donor of the active site. Residues K244 and 273-275 each bind NAD(+); that span reads VVT.

The protein belongs to the TER reductase family. Monomer.

It carries out the reaction a 2,3-saturated acyl-[ACP] + NAD(+) = a (2E)-enoyl-[ACP] + NADH + H(+). The protein operates within lipid metabolism; fatty acid biosynthesis. In terms of biological role, involved in the final reduction of the elongation cycle of fatty acid synthesis (FAS II). Catalyzes the reduction of a carbon-carbon double bond in an enoyl moiety that is covalently linked to an acyl carrier protein (ACP). This chain is Enoyl-[acyl-carrier-protein] reductase [NADH], found in Shewanella baltica (strain OS185).